Here is a 440-residue protein sequence, read N- to C-terminus: NADH-quinone oxidoreductase subunit D (440 aa).

The protein belongs to the complex I 49 kDa subunit family. As to quaternary structure, NDH-1 is composed of 14 different subunits. Subunits NuoB, C, D, E, F, and G constitute the peripheral sector of the complex.

It is found in the cell membrane. It carries out the reaction a quinone + NADH + 5 H(+)(in) = a quinol + NAD(+) + 4 H(+)(out). NDH-1 shuttles electrons from NADH, via FMN and iron-sulfur (Fe-S) centers, to quinones in the respiratory chain. The immediate electron acceptor for the enzyme in this species is believed to be a menaquinone. Couples the redox reaction to proton translocation (for every two electrons transferred, four hydrogen ions are translocated across the cytoplasmic membrane), and thus conserves the redox energy in a proton gradient. The chain is NADH-quinone oxidoreductase subunit D from Acidothermus cellulolyticus (strain ATCC 43068 / DSM 8971 / 11B).